Reading from the N-terminus, the 510-residue chain is NAD(P)H-quinone oxidoreductase subunit 2 A, chloroplastic (510 aa).

12 helical membrane passes run 24 to 44 (LLLFNGSFIFPECILIFGLIL), 59 to 79 (WFYFISSTCLVISITALLFRW), 99 to 119 (IFQFLILLCSTLCIPLSVEYI), 124 to 144 (MAITEFLLFVLTATLGGMFLC), 149 to 169 (LITIFVAPECFSLCSYLLSGY), 183 to 203 (YLLMGGAGSSILVHGFSWLYG), 229 to 249 (ISLALISITVGLGFKLSPAPF), 295 to 315 (WHLLLEILAILSMILGNLLAI), 323 to 343 (MLAYSSIGQIGYVIIGIIVGD), 354 to 374 (YMLFYISMNLGTFACIVLFGL), 395 to 415 (ALSLALCLLSLGGLPPLAGFF), and 418 to 438 (LYLFWCGWQAGLYFLVSIGLL).

Belongs to the complex I subunit 2 family. As to quaternary structure, NDH is composed of at least 16 different subunits, 5 of which are encoded in the nucleus.

It localises to the plastid. It is found in the chloroplast thylakoid membrane. The enzyme catalyses a plastoquinone + NADH + (n+1) H(+)(in) = a plastoquinol + NAD(+) + n H(+)(out). The catalysed reaction is a plastoquinone + NADPH + (n+1) H(+)(in) = a plastoquinol + NADP(+) + n H(+)(out). NDH shuttles electrons from NAD(P)H:plastoquinone, via FMN and iron-sulfur (Fe-S) centers, to quinones in the photosynthetic chain and possibly in a chloroplast respiratory chain. The immediate electron acceptor for the enzyme in this species is believed to be plastoquinone. Couples the redox reaction to proton translocation, and thus conserves the redox energy in a proton gradient. This chain is NAD(P)H-quinone oxidoreductase subunit 2 A, chloroplastic, found in Triticum aestivum (Wheat).